A 395-amino-acid chain; its full sequence is Elongation factor Tu (395 aa).

The 195-residue stretch at 10 to 204 (KPHVNIGTIG…EVDAYIPTPE (195 aa)) folds into the tr-type G domain. The G1 stretch occupies residues 19-26 (GHVDHGKT). Position 19 to 26 (19 to 26 (GHVDHGKT)) interacts with GTP. Thr26 contributes to the Mg(2+) binding site. Residues 60–64 (GITIS) form a G2 region. The interval 81–84 (DCPG) is G3. GTP is bound by residues 81–85 (DCPGH) and 136–139 (NKCD). The segment at 136–139 (NKCD) is G4. The interval 174 to 176 (SAL) is G5.

This sequence belongs to the TRAFAC class translation factor GTPase superfamily. Classic translation factor GTPase family. EF-Tu/EF-1A subfamily. Monomer.

The protein resides in the cytoplasm. It carries out the reaction GTP + H2O = GDP + phosphate + H(+). In terms of biological role, GTP hydrolase that promotes the GTP-dependent binding of aminoacyl-tRNA to the A-site of ribosomes during protein biosynthesis. In Bacillus cereus (strain G9842), this protein is Elongation factor Tu.